A 240-amino-acid chain; its full sequence is tRNA (guanine-N(1)-)-methyltransferase (240 aa).

Residues Gly-110 and 129–134 each bind S-adenosyl-L-methionine; that span reads LGDFVL.

The protein belongs to the RNA methyltransferase TrmD family. Homodimer.

The protein localises to the cytoplasm. The catalysed reaction is guanosine(37) in tRNA + S-adenosyl-L-methionine = N(1)-methylguanosine(37) in tRNA + S-adenosyl-L-homocysteine + H(+). Its function is as follows. Specifically methylates guanosine-37 in various tRNAs. This Clostridium botulinum (strain Kyoto / Type A2) protein is tRNA (guanine-N(1)-)-methyltransferase.